Consider the following 330-residue polypeptide: Polygalacturonase inhibitor 2 (330 aa).

The first 21 residues, 1–21 (MDKTMTLFLLLSTLLLTTSLA), serve as a signal peptide directing secretion. Intrachain disulfides connect C25–C55 and C56–C63. LRR repeat units lie at residues 69–93 (NHRVTSLIIQDGEISGQIPPEVGDL), 94–117 (PYLTSLIFRKLTNLTGHIQPTIAK), 118–141 (LKNLTFLRLSWTNLTGPVPEFLSQ), 142–166 (LKNLEYIDLSFNDLSGSIPSSLSSL), 167–192 (RKLEYLELSRNKLTGPIPESFGTFSG), 194–215 (VPSLFLSHNQLSGTIPKSLGNP), 217–237 (FYRIDLSRNKLQGDASILFGA), 238–260 (KKTTWIVDISRNMFQFDLSKVKL), 261–285 (AKTLNNLDMNHNGITGSIPAEWSKA), and 287–308 (FQLLNVSYNRLCGRIPKGEYIQ). N-linked (GlcNAc...) asparagine glycans are attached at residues N106, N120, and N130. N-linked (GlcNAc...) asparagine glycosylation is present at N291. Disulfide bonds link C298–C320 and C322–C329.

This sequence belongs to the polygalacturonase-inhibiting protein family.

The protein resides in the secreted. Its subcellular location is the cell wall. It is found in the membrane. Its function is as follows. Inhibitor of fungal polygalacturonase. It is an important factor for plant resistance to phytopathogenic fungi. The protein is Polygalacturonase inhibitor 2 (PGIP2) of Arabidopsis thaliana (Mouse-ear cress).